Reading from the N-terminus, the 204-residue chain is Holliday junction branch migration complex subunit RuvA (204 aa).

The tract at residues 1-64 (MIGRLQGKLI…EDAHLLFGFS (64 aa)) is domain I. The interval 65–143 (TKTDRTLFRE…GLRQPDFFVE (79 aa)) is domain II. The tract at residues 144–155 (SKHITVPDIVSA) is flexible linker. The tract at residues 156-204 (EKETPNDEAVAALVALGYKPPEAAKMVKKVANGDLTSEQLIREALKAAL) is domain III.

It belongs to the RuvA family. In terms of assembly, homotetramer. Forms an RuvA(8)-RuvB(12)-Holliday junction (HJ) complex. HJ DNA is sandwiched between 2 RuvA tetramers; dsDNA enters through RuvA and exits via RuvB. An RuvB hexamer assembles on each DNA strand where it exits the tetramer. Each RuvB hexamer is contacted by two RuvA subunits (via domain III) on 2 adjacent RuvB subunits; this complex drives branch migration. In the full resolvosome a probable DNA-RuvA(4)-RuvB(12)-RuvC(2) complex forms which resolves the HJ.

The protein resides in the cytoplasm. The RuvA-RuvB-RuvC complex processes Holliday junction (HJ) DNA during genetic recombination and DNA repair, while the RuvA-RuvB complex plays an important role in the rescue of blocked DNA replication forks via replication fork reversal (RFR). RuvA specifically binds to HJ cruciform DNA, conferring on it an open structure. The RuvB hexamer acts as an ATP-dependent pump, pulling dsDNA into and through the RuvAB complex. HJ branch migration allows RuvC to scan DNA until it finds its consensus sequence, where it cleaves and resolves the cruciform DNA. In Actinobacillus succinogenes (strain ATCC 55618 / DSM 22257 / CCUG 43843 / 130Z), this protein is Holliday junction branch migration complex subunit RuvA.